The sequence spans 61 residues: Photosystem II reaction center protein K (61 aa).

A propeptide spanning residues 1-24 (MLNIFSLICICLNSALYSSSLFFA) is cleaved from the precursor. Residues 40-60 (MPVIPLFFFLLAFVWQAAVSF) form a helical membrane-spanning segment.

It belongs to the PsbK family. In terms of assembly, PSII is composed of 1 copy each of membrane proteins PsbA, PsbB, PsbC, PsbD, PsbE, PsbF, PsbH, PsbI, PsbJ, PsbK, PsbL, PsbM, PsbT, PsbX, PsbY, PsbZ, Psb30/Ycf12, at least 3 peripheral proteins of the oxygen-evolving complex and a large number of cofactors. It forms dimeric complexes.

Its subcellular location is the plastid. It localises to the chloroplast thylakoid membrane. One of the components of the core complex of photosystem II (PSII). PSII is a light-driven water:plastoquinone oxidoreductase that uses light energy to abstract electrons from H(2)O, generating O(2) and a proton gradient subsequently used for ATP formation. It consists of a core antenna complex that captures photons, and an electron transfer chain that converts photonic excitation into a charge separation. The sequence is that of Photosystem II reaction center protein K from Panax ginseng (Korean ginseng).